A 220-amino-acid polypeptide reads, in one-letter code: Pyridoxine/pyridoxamine 5'-phosphate oxidase (220 aa).

Residues 13–16 and Lys-77 contribute to the substrate site; that span reads RVEY. Residues 72–77, 87–88, Lys-94, and Gln-116 contribute to the FMN site; these read RTVLCK and FT. Substrate contacts are provided by Tyr-134, Arg-138, and Ser-142. Residues 151 to 152 and Trp-197 contribute to the FMN site; that span reads QS. Substrate is bound at residue 203–205; that stretch reads RVH. Arg-207 contacts FMN.

Belongs to the pyridoxamine 5'-phosphate oxidase family. As to quaternary structure, homodimer. It depends on FMN as a cofactor.

It carries out the reaction pyridoxamine 5'-phosphate + O2 + H2O = pyridoxal 5'-phosphate + H2O2 + NH4(+). The enzyme catalyses pyridoxine 5'-phosphate + O2 = pyridoxal 5'-phosphate + H2O2. Its pathway is cofactor metabolism; pyridoxal 5'-phosphate salvage; pyridoxal 5'-phosphate from pyridoxamine 5'-phosphate: step 1/1. It participates in cofactor metabolism; pyridoxal 5'-phosphate salvage; pyridoxal 5'-phosphate from pyridoxine 5'-phosphate: step 1/1. Catalyzes the oxidation of either pyridoxine 5'-phosphate (PNP) or pyridoxamine 5'-phosphate (PMP) into pyridoxal 5'-phosphate (PLP). The sequence is that of Pyridoxine/pyridoxamine 5'-phosphate oxidase from Mycobacterium sp. (strain KMS).